The chain runs to 837 residues: Zinc fingers and homeoboxes protein 2 (837 aa).

Residues 1-41 (MASKRKSTTPCMVRTSQVVEQDVPEEVDRAKEKGIGTPQPD) form a disordered region. The segment at 27 to 77 (VDRAKEKGIGTPQPDVAKDCWAAELENSSKENEVIEVKSMGESQSKKLQGG) is interaction with EFNB1. T37 carries the post-translational modification Phosphothreonine. A Glycyl lysine isopeptide (Lys-Gly) (interchain with G-Cter in SUMO2) cross-link involves residue K64. 2 consecutive C2H2-type zinc fingers follow at residues 78–101 (YECK…DMQH) and 110–133 (YVCA…SKFH). Low complexity predominate over residues 167-180 (TSGPGTGDSDSGIS). The interval 167–203 (TSGPGTGDSDSGISVSKTPIMKPGKPKADAKKVPKKP) is disordered. Over residues 192-203 (PKADAKKVPKKP) the composition is skewed to basic and acidic residues. A required for homodimerization region spans residues 195 to 358 (DAKKVPKKPE…PAQLAPTKVT (164 aa)). 4 consecutive DNA-binding regions (homeobox) follow at residues 263–324 (NTTK…WSPE), 439–501 (TPAS…IVHI), 530–591 (PQKF…EQAV), and 628–690 (SPSP…TVKW). The segment at 263–446 (NTTKYNSALD…PLTPASDRKK (184 aa)) is required for repressor activity. Positions 263-497 (NTTKYNSALD…SDHRYRCQRG (235 aa)) are required for interaction with NFYA. The segment at 317-446 (HGISWSPEEV…PLTPASDRKK (130 aa)) is required for nuclear localization. Positions 404 to 445 (GQKRPLVTPQAAPEPKRPHIAQVPEPPPKVANPPLTPASDRK) are disordered. Pro residues predominate over residues 427-439 (PEPPPKVANPPLT). A Glycyl lysine isopeptide (Lys-Gly) (interchain with G-Cter in SUMO2) cross-link involves residue K455. The segment at 754-837 (EPAKDCLPAK…DCVPAEAGQA (84 aa)) is disordered. 2 positions are modified to phosphoserine: S825 and S827.

It belongs to the ZHX family. As to quaternary structure, homodimer (via homeobox domain 1). Heterodimer with ZHX1 (via homeobox domain 1). Heterodimer with ZHX3 (via homeobox domain 1). Heterodimerization with ZHX1 is not necessary for repressor activity. Interacts (via homeobox domain) with NFYA (via N-terminus). Interacts with EFNB1 intracellular domain peptide; the interaction enhances ZHX2 transcriptional repression activity.

The protein resides in the nucleus. Functionally, acts as a transcriptional repressor. Represses the promoter activity of the CDC25C gene stimulated by NFYA. May play a role in retinal development where it regulates the composition of bipolar cell populations, by promoting differentiation of bipolar OFF-type cells. In the brain, may promote maintenance and suppress differentiation of neural progenitor cells in the developing cortex. This is Zinc fingers and homeoboxes protein 2 (ZHX2) from Pongo abelii (Sumatran orangutan).